The primary structure comprises 174 residues: tRNA (cytidine(56)-2'-O)-methyltransferase (174 aa).

S-adenosyl-L-methionine is bound by residues Leu-80, 105–109 (GAEKV), and 123–130 (ISNQPHSE).

Belongs to the aTrm56 family. In terms of assembly, homodimer.

Its subcellular location is the cytoplasm. It carries out the reaction cytidine(56) in tRNA + S-adenosyl-L-methionine = 2'-O-methylcytidine(56) in tRNA + S-adenosyl-L-homocysteine + H(+). In terms of biological role, specifically catalyzes the AdoMet-dependent 2'-O-ribose methylation of cytidine at position 56 in tRNAs. The sequence is that of tRNA (cytidine(56)-2'-O)-methyltransferase from Metallosphaera sedula (strain ATCC 51363 / DSM 5348 / JCM 9185 / NBRC 15509 / TH2).